We begin with the raw amino-acid sequence, 686 residues long: ATP-dependent zinc metalloprotease FTSH 1, chloroplastic (686 aa).

The N-terminal 16 residues, 1–16 (MAPPCSISSASHLLIT), are a transit peptide targeting the chloroplast. The chain crosses the membrane as a helical span at residues 173–193 (FLAFVGNLLFPFLAFAGLFFL). Position 272-279 (272-279 (GPPGTGKT)) interacts with ATP. His494 contributes to the Zn(2+) binding site. Glu495 is an active-site residue. Positions 498 and 575 each coordinate Zn(2+).

The protein in the N-terminal section; belongs to the AAA ATPase family. In the C-terminal section; belongs to the peptidase M41 family. Zn(2+) serves as cofactor.

Its subcellular location is the plastid. The protein localises to the chloroplast thylakoid membrane. Functionally, probable ATP-dependent zinc metallopeptidase. This chain is ATP-dependent zinc metalloprotease FTSH 1, chloroplastic (FTSH1), found in Oryza sativa subsp. japonica (Rice).